A 525-amino-acid polypeptide reads, in one-letter code: Glutamyl-tRNA(Gln) amidotransferase subunit A, mitochondrial (525 aa).

Residues Lys76 and Ser168 each act as charge relay system in the active site. The active-site Acyl-ester intermediate is Ser192.

It belongs to the amidase family. GatA subfamily. As to quaternary structure, subunit of the heterotrimeric GatCAB amidotransferase (AdT) complex, composed of A (QRSL1), B (GATB) and C (GATC) subunits.

Its subcellular location is the mitochondrion. It carries out the reaction L-glutamyl-tRNA(Gln) + L-glutamine + ATP + H2O = L-glutaminyl-tRNA(Gln) + L-glutamate + ADP + phosphate + H(+). Its function is as follows. Allows the formation of correctly charged Gln-tRNA(Gln) through the transamidation of misacylated Glu-tRNA(Gln) in the mitochondria. The reaction takes place in the presence of glutamine and ATP through an activated gamma-phospho-Glu-tRNA(Gln). This Mus musculus (Mouse) protein is Glutamyl-tRNA(Gln) amidotransferase subunit A, mitochondrial (Qrsl1).